The primary structure comprises 128 residues: uncharacterized protein (128 aa).

Transmembrane regions (helical) follow at residues 19–41 (MAIV…YVGS), 54–71 (LTFL…SIMQ), and 75–97 (PLIA…VDNL).

It is found in the cell membrane. This is an uncharacterized protein from Pasteurella multocida (strain Pm70).